Consider the following 194-residue polypeptide: Adenylate kinase isoenzyme 1 (194 aa).

M1 is subject to N-acetylmethionine. Position 18–23 (18–23 (GSGKGT)) interacts with ATP. At S38 the chain carries Phosphoserine. Residues 38–67 (STGDLLRAEVSSGSARGKMLSEIMEKGQLV) form an NMP region. Residues T39, R44, 65 to 67 (QLV), 94 to 97 (GYPR), and Q101 contribute to the AMP site. Positions 131-141 (KRGETSGRVDD) are LID. An ATP-binding site is contributed by R132. AMP contacts are provided by R138 and R149. Position 177 (G177) interacts with ATP.

The protein belongs to the adenylate kinase family. AK1 subfamily. Monomer. The cofactor is Mg(2+).

The protein localises to the cytoplasm. It carries out the reaction a ribonucleoside 5'-phosphate + ATP = a ribonucleoside 5'-diphosphate + ADP. The catalysed reaction is AMP + ATP = 2 ADP. The enzyme catalyses dAMP + ATP = dADP + ADP. It catalyses the reaction dATP + AMP = dADP + ADP. It carries out the reaction dAMP + dATP = 2 dADP. The catalysed reaction is a 2'-deoxyribonucleoside 5'-diphosphate + ATP = a 2'-deoxyribonucleoside 5'-triphosphate + ADP. The enzyme catalyses a ribonucleoside 5'-diphosphate + ATP = a ribonucleoside 5'-triphosphate + ADP. It catalyses the reaction CDP + GTP = CTP + GDP. It carries out the reaction GDP + ATP = GTP + ADP. The catalysed reaction is UDP + ATP = UTP + ADP. The enzyme catalyses GTP + UDP = UTP + GDP. It catalyses the reaction dTDP + GTP = dTTP + GDP. It carries out the reaction dCDP + GTP = dCTP + GDP. The catalysed reaction is dGDP + ATP = dGTP + ADP. The enzyme catalyses dADP + GTP = dATP + GDP. It catalyses the reaction thiamine diphosphate + ADP = thiamine triphosphate + AMP. Functionally, catalyzes the reversible transfer of the terminal phosphate group between ATP and AMP. Also displays broad nucleoside diphosphate kinase activity. Plays an important role in cellular energy homeostasis and in adenine nucleotide metabolism. Also catalyzes at a very low rate the synthesis of thiamine triphosphate (ThTP) from thiamine diphosphate (ThDP) and ADP. This chain is Adenylate kinase isoenzyme 1, found in Bos taurus (Bovine).